Reading from the N-terminus, the 119-residue chain is Large ribosomal subunit protein bL20 (119 aa).

This sequence belongs to the bacterial ribosomal protein bL20 family.

Functionally, binds directly to 23S ribosomal RNA and is necessary for the in vitro assembly process of the 50S ribosomal subunit. It is not involved in the protein synthesizing functions of that subunit. The polypeptide is Large ribosomal subunit protein bL20 (Rhodopseudomonas palustris (strain BisB18)).